The following is a 99-amino-acid chain: uncharacterized protein (99 aa).

The signal sequence occupies residues methionine 1–glycine 17. Cysteine 18 is lipidated: N-palmitoyl cysteine. Cysteine 18 carries the S-diacylglycerol cysteine lipid modification.

It localises to the cell membrane. This is an uncharacterized protein from Escherichia coli (strain UTI89 / UPEC).